We begin with the raw amino-acid sequence, 50 residues long: Inter-alpha-trypsin inhibitor heavy chain H2 (50 aa).

Belongs to the ITIH family. In terms of assembly, I-alpha-I plasma protease inhibitors are assembled from one or two heavy chains (HC) and one light chain, bikunin. Inter-alpha-inhibitor (I-alpha-I) is composed of ITIH1/HC1, ITIH2/HC2 and bikunin. Post-translationally, phosphorylated by FAM20C in the extracellular medium.

Its subcellular location is the secreted. Functionally, may act as a carrier of hyaluronan in serum or as a binding protein between hyaluronan and other matrix protein, including those on cell surfaces in tissues to regulate the localization, synthesis and degradation of hyaluronan which are essential to cells undergoing biological processes. The protein is Inter-alpha-trypsin inhibitor heavy chain H2 (ITIH2) of Bos taurus (Bovine).